The chain runs to 352 residues: Glycerol-1-phosphate dehydrogenase [NAD(P)+] (352 aa).

Residues Gly-91–Asp-95 and Thr-113–Ser-116 each bind NAD(+). Substrate is bound at residue Asp-118. Residue Ser-122 coordinates NAD(+). Substrate is bound at residue Glu-169. Glu-169 and His-249 together coordinate Zn(2+). Residue His-253 coordinates substrate. His-269 contributes to the Zn(2+) binding site.

This sequence belongs to the glycerol-1-phosphate dehydrogenase family. In terms of assembly, homodimer. Requires Zn(2+) as cofactor.

The protein localises to the cytoplasm. The enzyme catalyses sn-glycerol 1-phosphate + NAD(+) = dihydroxyacetone phosphate + NADH + H(+). It carries out the reaction sn-glycerol 1-phosphate + NADP(+) = dihydroxyacetone phosphate + NADPH + H(+). Its pathway is membrane lipid metabolism; glycerophospholipid metabolism. Catalyzes the NAD(P)H-dependent reduction of dihydroxyacetonephosphate (DHAP or glycerone phosphate) to glycerol 1-phosphate (G1P). The G1P thus generated is used as the glycerophosphate backbone of phospholipids in the cellular membranes of Archaea. This chain is Glycerol-1-phosphate dehydrogenase [NAD(P)+], found in Caldivirga maquilingensis (strain ATCC 700844 / DSM 13496 / JCM 10307 / IC-167).